Here is a 938-residue protein sequence, read N- to C-terminus: Respiratory burst oxidase homolog protein C (938 aa).

The tract at residues Met-1–Ala-63 is disordered. At Met-1–Arg-369 the chain is on the cytoplasmic side. Residues Ala-115–Arg-141 adopt a coiled-coil conformation. EF-hand-like stretches follow at residues Thr-185–Ala-195 and Arg-222–Gln-233. 2 EF-hand domains span residues Ser-245 to Ala-280 and Gln-289 to Gln-324. Asp-258, Asp-260, Asp-262, Arg-264, and Glu-269 together coordinate Ca(2+). Residues Val-370–Gln-390 form a helical membrane-spanning segment. Residues Tyr-391–Pro-402 lie on the Extracellular side of the membrane. A helical transmembrane segment spans residues Cys-403–Leu-423. Residues Lys-408–Ile-565 form the Ferric oxidoreductase domain. The Cytoplasmic segment spans residues Pro-424 to Val-454. A helical transmembrane segment spans residues Ile-455–Phe-475. The Extracellular segment spans residues Pro-476–Gly-509. The chain crosses the membrane as a helical span at residues Val-510–Phe-530. Over Arg-531–Thr-545 the chain is Cytoplasmic. A helical transmembrane segment spans residues Gly-546–Val-566. The Extracellular segment spans residues His-567–Arg-580. Residues Ser-581–Leu-599 form a helical membrane-spanning segment. The FAD-binding FR-type domain occupies Leu-599 to Asp-727. The Cytoplasmic portion of the chain corresponds to Arg-600–Glu-732. A helical membrane pass occupies residues Val-733–Ile-753. Residues Val-754–Phe-938 are Extracellular-facing. The segment at Glu-762–Gly-796 is disordered. Positions Leu-767–Met-784 are enriched in polar residues.

This sequence belongs to the RBOH (TC 5.B.1.3) family. Monomer and homodimer. Post-translationally, phosphorylated by CPK. Expressed in leaves.

The protein localises to the membrane. Its function is as follows. Calcium-dependent NADPH oxidase that generates superoxide. May be responsible for the oxidative burst in response to pathogen attack in the leaves. This is Respiratory burst oxidase homolog protein C (RBOHC) from Solanum tuberosum (Potato).